The primary structure comprises 191 residues: Imidazoleglycerol-phosphate dehydratase (191 aa).

The protein belongs to the imidazoleglycerol-phosphate dehydratase family.

The protein resides in the cytoplasm. The catalysed reaction is D-erythro-1-(imidazol-4-yl)glycerol 3-phosphate = 3-(imidazol-4-yl)-2-oxopropyl phosphate + H2O. Its pathway is amino-acid biosynthesis; L-histidine biosynthesis; L-histidine from 5-phospho-alpha-D-ribose 1-diphosphate: step 6/9. The sequence is that of Imidazoleglycerol-phosphate dehydratase from Methanosarcina mazei (strain ATCC BAA-159 / DSM 3647 / Goe1 / Go1 / JCM 11833 / OCM 88) (Methanosarcina frisia).